The primary structure comprises 64 residues: Prokaryotic ubiquitin-like protein Pup (64 aa).

Positions 1 to 35 (MAQGGQVSAGGGRRDDDEPIEQTSGAGTQQVNVTG) are disordered. The segment covering 21–33 (EQTSGAGTQQVNV) has biased composition (polar residues). The interval 21–58 (EQTSGAGTQQVNVTGTDDLLDEIDGLLENNAEEFVRSY) is ARC ATPase binding. Glutamine 64 is subject to Deamidated glutamine. Glutamine 64 is covalently cross-linked (Isoglutamyl lysine isopeptide (Gln-Lys) (interchain with K-? in acceptor proteins)).

Belongs to the prokaryotic ubiquitin-like protein family. Strongly interacts with the proteasome-associated ATPase ARC through a hydrophobic interface; the interacting region of Pup lies in its C-terminal half. There is one Pup binding site per ARC hexamer ring. In terms of processing, is modified by deamidation of its C-terminal glutamine to glutamate by the deamidase Dop, a prerequisite to the subsequent pupylation process.

The protein operates within protein degradation; proteasomal Pup-dependent pathway. Its function is as follows. Protein modifier that is covalently attached to lysine residues of substrate proteins, thereby targeting them for proteasomal degradation. The tagging system is termed pupylation. In Corynebacterium jeikeium (strain K411), this protein is Prokaryotic ubiquitin-like protein Pup.